The following is a 261-amino-acid chain: 3-hydroxyacyl-CoA dehydrogenase type-2 (261 aa).

An N-acetylalanine modification is found at A2. Residues S20 and D41 each coordinate NAD(+). Residue K53 is modified to N6-acetyllysine; alternate. K53 is subject to N6-succinyllysine; alternate. V65 contributes to the NAD(+) binding site. K69 is modified (N6-acetyllysine). C91 is an NAD(+) binding site. K99 and K105 each carry N6-acetyllysine. K107 bears the N6-acetyllysine; alternate mark. Position 107 is an N6-succinyllysine; alternate (K107). S155 contributes to the substrate binding site. NAD(+) is bound by residues Y168, K172, F201, and T203. The Proton acceptor role is filled by Y168. The residue at position 212 (K212) is an N6-acetyllysine; alternate. K212 is subject to N6-succinyllysine; alternate.

This sequence belongs to the short-chain dehydrogenases/reductases (SDR) family. In terms of assembly, homotetramer. Component of mitochondrial ribonuclease P, a complex composed of TRMT10C/MRPP1, HSD17B10/MRPP2 and PRORP/MRPP3. Interacts with TRMT10C/MRPP1; forming the MRPP1-MRPP2 subcomplex of the mitochondrial ribonuclease P complex.

The protein resides in the mitochondrion. The protein localises to the mitochondrion matrix. It localises to the mitochondrion nucleoid. It catalyses the reaction a (3S)-3-hydroxyacyl-CoA + NAD(+) = a 3-oxoacyl-CoA + NADH + H(+). It carries out the reaction (2S,3S)-3-hydroxy-2-methylbutanoyl-CoA + NAD(+) = 2-methyl-3-oxobutanoyl-CoA + NADH + H(+). The enzyme catalyses testosterone + NAD(+) = androst-4-ene-3,17-dione + NADH + H(+). The catalysed reaction is 5alpha-androstane-3alpha,17beta-diol + NAD(+) = 17beta-hydroxy-5alpha-androstan-3-one + NADH + H(+). It catalyses the reaction 17beta-estradiol + NAD(+) = estrone + NADH + H(+). It carries out the reaction cholate + NAD(+) = 3alpha,12alpha-dihydroxy-7-oxo-5beta-cholanate + NADH + H(+). The enzyme catalyses (3S)-3-hydroxybutanoyl-CoA + NAD(+) = acetoacetyl-CoA + NADH + H(+). The catalysed reaction is (3S)-hydroxyoctanoyl-CoA + NAD(+) = 3-oxooctanoyl-CoA + NADH + H(+). It catalyses the reaction (3S)-hydroxyhexadecanoyl-CoA + NAD(+) = 3-oxohexadecanoyl-CoA + NADH + H(+). It carries out the reaction 17beta-hydroxy-5alpha-androstan-3-one + NAD(+) = 5alpha-androstan-3,17-dione + NADH + H(+). The enzyme catalyses 5alpha-pregnan-20beta-ol-3-one + NAD(+) = 5alpha-pregnane-3,20-dione + NADH + H(+). The catalysed reaction is 3alpha-hydroxy-5alpha-pregnan-20-one + NAD(+) = 5alpha-pregnane-3,20-dione + NADH + H(+). It catalyses the reaction cortisone + NAD(+) = 17alpha-hydroxypregn-4-en-3,11,20-trione-21-al + NADH + H(+). It carries out the reaction 11-dehydrocorticosterone + NAD(+) = pregn-4-ene-3,11,20,21-tetraone + NADH + H(+). The enzyme catalyses cortisol + NAD(+) = 11beta,17alpha-dihydroxypregn-4-ene-3,20,21-trione + NADH + H(+). The catalysed reaction is chenodeoxycholate + NAD(+) = 7-oxolithocholate + NADH + H(+). It catalyses the reaction ursodeoxycholate + NAD(+) = 7-oxolithocholate + NADH + H(+). It carries out the reaction 3beta,7beta-dihydroxy-5beta-cholan-24-oate + NAD(+) = 3beta-hydroxy-7-oxo-5beta-cholan-24-oate + NADH + H(+). Its pathway is amino-acid degradation; L-isoleucine degradation. The protein operates within lipid metabolism; fatty acid beta-oxidation. It functions in the pathway steroid metabolism. It participates in lipid metabolism; bile acid biosynthesis. Functionally, mitochondrial dehydrogenase involved in pathways of fatty acid, branched-chain amino acid and steroid metabolism. Acts as (S)-3-hydroxyacyl-CoA dehydrogenase in mitochondrial fatty acid beta-oxidation, a major degradation pathway of fatty acids. Catalyzes the third step in the beta-oxidation cycle, namely the reversible conversion of (S)-3-hydroxyacyl-CoA to 3-ketoacyl-CoA. Preferentially accepts straight medium- and short-chain acyl-CoA substrates with highest efficiency for (3S)-hydroxybutanoyl-CoA. Acts as 3-hydroxy-2-methylbutyryl-CoA dehydrogenase in branched-chain amino acid catabolic pathway. Catalyzes the oxidation of 3-hydroxy-2-methylbutanoyl-CoA into 2-methyl-3-oxobutanoyl-CoA, a step in isoleucine degradation pathway. Has hydroxysteroid dehydrogenase activity toward steroid hormones and bile acids. Catalyzes the oxidation of 3alpha-, 17beta-, 20beta- and 21-hydroxysteroids and 7alpha- and 7beta-hydroxy bile acids. Oxidizes allopregnanolone/brexanolone at the 3alpha-hydroxyl group, which is known to be critical for the activation of gamma-aminobutyric acid receptors (GABAARs) chloride channel. Has phospholipase C-like activity toward cardiolipin and its oxidized species. Likely oxidizes the 2'-hydroxyl in the head group of cardiolipin to form a ketone intermediate that undergoes nucleophilic attack by water and fragments into diacylglycerol, dihydroxyacetone and orthophosphate. Has higher affinity for cardiolipin with oxidized fatty acids and may degrade these species during the oxidative stress response to protect cells from apoptosis. By interacting with intracellular amyloid-beta, it may contribute to the neuronal dysfunction associated with Alzheimer disease (AD). Essential for structural and functional integrity of mitochondria. In addition to mitochondrial dehydrogenase activity, moonlights as a component of mitochondrial ribonuclease P, a complex that cleaves tRNA molecules in their 5'-ends. Together with TRMT10C/MRPP1, forms a subcomplex of the mitochondrial ribonuclease P, named MRPP1-MRPP2 subcomplex, which displays functions that are independent of the ribonuclease P activity. The MRPP1-MRPP2 subcomplex catalyzes the formation of N(1)-methylguanine and N(1)-methyladenine at position 9 (m1G9 and m1A9, respectively) in tRNAs; HSD17B10/MRPP2 acting as a non-catalytic subunit. The MRPP1-MRPP2 subcomplex also acts as a tRNA maturation platform: following 5'-end cleavage by the mitochondrial ribonuclease P complex, the MRPP1-MRPP2 subcomplex enhances the efficiency of 3'-processing catalyzed by ELAC2, retains the tRNA product after ELAC2 processing and presents the nascent tRNA to the mitochondrial CCA tRNA nucleotidyltransferase TRNT1 enzyme. Associates with mitochondrial DNA complexes at the nucleoids to initiate RNA processing and ribosome assembly. The polypeptide is 3-hydroxyacyl-CoA dehydrogenase type-2 (Hsd17b10) (Mus musculus (Mouse)).